The sequence spans 44 residues: MTRGNSNQPISYPIFTFRWLAIHGIAIPTVFFLGAITSMQFIQR.

Residues 19 to 35 (WLAIHGIAIPTVFFLGA) traverse the membrane as a helical segment. His-23 is a binding site for heme.

It belongs to the PsbE/PsbF family. In terms of assembly, heterodimer of an alpha subunit and a beta subunit. PSII is composed of 1 copy each of membrane proteins PsbA, PsbB, PsbC, PsbD, PsbE, PsbF, PsbH, PsbI, PsbJ, PsbK, PsbL, PsbM, PsbT, PsbX, PsbY, PsbZ, Psb30/Ycf12, at least 3 peripheral proteins of the oxygen-evolving complex and a large number of cofactors. It forms dimeric complexes. Requires heme b as cofactor.

The protein localises to the plastid. It localises to the chloroplast thylakoid membrane. Its function is as follows. This b-type cytochrome is tightly associated with the reaction center of photosystem II (PSII). PSII is a light-driven water:plastoquinone oxidoreductase that uses light energy to abstract electrons from H(2)O, generating O(2) and a proton gradient subsequently used for ATP formation. It consists of a core antenna complex that captures photons, and an electron transfer chain that converts photonic excitation into a charge separation. In Gracilaria tenuistipitata var. liui (Red alga), this protein is Cytochrome b559 subunit beta.